Reading from the N-terminus, the 325-residue chain is Tagatose 1,6-diphosphate aldolase 1 (325 aa).

The protein belongs to the aldolase LacD family.

It catalyses the reaction D-tagatofuranose 1,6-bisphosphate = D-glyceraldehyde 3-phosphate + dihydroxyacetone phosphate. Its pathway is carbohydrate metabolism; D-tagatose 6-phosphate degradation; D-glyceraldehyde 3-phosphate and glycerone phosphate from D-tagatose 6-phosphate: step 2/2. The chain is Tagatose 1,6-diphosphate aldolase 1 (lacD1) from Enterococcus faecalis (strain ATCC 700802 / V583).